Here is a 148-residue protein sequence, read N- to C-terminus: Gametocyte-specific factor 1-like (148 aa).

2 CHHC U11-48K-type zinc fingers span residues 6–33 (FEIC…RRKN) and 40–67 (MATC…VNRS). The Zn(2+) site is built by Cys9, His15, His25, Cys29, Cys43, His49, His59, and Cys63. The disordered stretch occupies residues 67-99 (SAVEEEDTENPLKVSPPSSEQNDDTQQVSPCLP). Positions 82 to 95 (PPSSEQNDDTQQVS) are enriched in polar residues.

Belongs to the UPF0224 (FAM112) family.

The sequence is that of Gametocyte-specific factor 1-like (GTSF1L) from Homo sapiens (Human).